The following is a 296-amino-acid chain: Haloalkane dehalogenase (296 aa).

An AB hydrolase-1 domain is found at 31–155; sequence PILFQHGNPT…QDRDLFQAFR (125 aa). Aspartate 108 serves as the catalytic Nucleophile. Catalysis depends on glutamate 132, which acts as the Proton donor. Histidine 272 (proton acceptor) is an active-site residue.

It belongs to the haloalkane dehalogenase family. Type 2 subfamily. In terms of assembly, monomer.

It localises to the periplasm. It catalyses the reaction 1-haloalkane + H2O = a halide anion + a primary alcohol + H(+). The enzyme catalyses (3R,6R)-1,3,4,6-tetrachlorocyclohexa-1,4-diene + 2 H2O = 2,5-dichlorocyclohexa-2,5-dien-1,4-diol + 2 chloride + 2 H(+). The protein operates within xenobiotic degradation; gamma-hexachlorocyclohexane degradation. In terms of biological role, catalyzes hydrolytic cleavage of carbon-halogen bonds in halogenated aliphatic compounds, leading to the formation of the corresponding primary alcohols, halide ions and protons. Is involved in the degradation of the important environmental pollutant gamma-hexachlorocyclohexane (gamma-HCH or lindane) as it also catalyzes conversion of 1,3,4,6-tetrachloro-1,4-cyclohexadiene (1,4-TCDN) to 2,5-dichloro-2,5-cyclohexadiene-1,4-diol (2,5-DDOL) via the intermediate 2,4,5-trichloro-2,5-cyclohexadiene-1-ol (2,4,5-DNOL). In Sphingobium indicum (strain DSM 16412 / CCM 7286 / MTCC 6364 / B90A), this protein is Haloalkane dehalogenase.